We begin with the raw amino-acid sequence, 183 residues long: Pectinesterase inhibitor 8 (183 aa).

The signal sequence occupies residues 1 to 30 (MAQRASRRPAAAAAAVVVAVVLAVSGGVGA). Cystine bridges form between C36–C51 and C107–C147.

The protein belongs to the PMEI family.

The protein resides in the secreted. Its subcellular location is the extracellular space. It is found in the apoplast. Its function is as follows. Pectin methylesterase (PME) inhibitor that inhibits PME in vitro. This chain is Pectinesterase inhibitor 8, found in Oryza sativa subsp. japonica (Rice).